We begin with the raw amino-acid sequence, 292 residues long: Mycothiol acetyltransferase (292 aa).

2 N-acetyltransferase domains span residues 13–168 and 159–292; these read ALDR…KWLQ and KSVA…VYEK. Residue Glu40 participates in 1D-myo-inositol 2-(L-cysteinylamino)-2-deoxy-alpha-D-glucopyranoside binding. Position 77 to 79 (77 to 79) interacts with acetyl-CoA; the sequence is LAV. Positions 179, 218, and 226 each coordinate 1D-myo-inositol 2-(L-cysteinylamino)-2-deoxy-alpha-D-glucopyranoside. Residues 230 to 232 and 237 to 243 contribute to the acetyl-CoA site; these read VGL and RGRGLGD. Tyr264 contacts 1D-myo-inositol 2-(L-cysteinylamino)-2-deoxy-alpha-D-glucopyranoside.

Belongs to the acetyltransferase family. MshD subfamily. As to quaternary structure, monomer.

It carries out the reaction 1D-myo-inositol 2-(L-cysteinylamino)-2-deoxy-alpha-D-glucopyranoside + acetyl-CoA = mycothiol + CoA + H(+). In terms of biological role, catalyzes the transfer of acetyl from acetyl-CoA to desacetylmycothiol (Cys-GlcN-Ins) to form mycothiol. In Corynebacterium glutamicum (strain R), this protein is Mycothiol acetyltransferase.